The following is a 111-amino-acid chain: ATP-dependent Clp protease adapter protein ClpS (111 aa).

The protein belongs to the ClpS family. In terms of assembly, binds to the N-terminal domain of the chaperone ClpA.

Its function is as follows. Involved in the modulation of the specificity of the ClpAP-mediated ATP-dependent protein degradation. This Legionella pneumophila (strain Corby) protein is ATP-dependent Clp protease adapter protein ClpS.